The chain runs to 146 residues: Small ribosomal subunit protein uS5 (146 aa).

Positions 8–71 (FQEAIVKIGR…DDAFKSLVTV (64 aa)) constitute an S5 DRBM domain.

It belongs to the universal ribosomal protein uS5 family. As to quaternary structure, part of the 30S ribosomal subunit. Contacts proteins S4 and S8.

Its function is as follows. With S4 and S12 plays an important role in translational accuracy. Located at the back of the 30S subunit body where it stabilizes the conformation of the head with respect to the body. In Aliarcobacter butzleri (strain RM4018) (Arcobacter butzleri), this protein is Small ribosomal subunit protein uS5.